A 123-amino-acid polypeptide reads, in one-letter code: Small ribosomal subunit protein uS12 (123 aa).

A disordered region spans residues methionine 1–proline 22. Aspartate 89 is modified (3-methylthioaspartic acid). The disordered stretch occupies residues glycine 100–lysine 123. The segment covering asparagine 111–lysine 123 has biased composition (basic residues).

It belongs to the universal ribosomal protein uS12 family. In terms of assembly, part of the 30S ribosomal subunit. Contacts proteins S8 and S17. May interact with IF1 in the 30S initiation complex.

With S4 and S5 plays an important role in translational accuracy. In terms of biological role, interacts with and stabilizes bases of the 16S rRNA that are involved in tRNA selection in the A site and with the mRNA backbone. Located at the interface of the 30S and 50S subunits, it traverses the body of the 30S subunit contacting proteins on the other side and probably holding the rRNA structure together. The combined cluster of proteins S8, S12 and S17 appears to hold together the shoulder and platform of the 30S subunit. The polypeptide is Small ribosomal subunit protein uS12 (Pseudomonas putida (strain GB-1)).